Consider the following 294-residue polypeptide: Antiviral protein alpha (294 aa).

Residues 1–24 (MKMMVVVVVMMLSWLILKPPSTWA) form the signal peptide. Cystine bridges form between Cys-58–Cys-282 and Cys-108–Cys-130. Glu-199 is an active-site residue. The propeptide occupies 286 to 294 (YQSAMFPHL).

The protein belongs to the ribosome-inactivating protein family. Type 1 RIP subfamily. In terms of assembly, monomer.

Its subcellular location is the secreted. The protein resides in the cell wall. The catalysed reaction is Endohydrolysis of the N-glycosidic bond at one specific adenosine on the 28S rRNA.. In terms of biological role, inhibits viral infection of plants, and protein synthesis in vitro. Has also been shown to inhibit the replication of mammalian viruses. The protein may provide a means of cellular suicide upon invasion by a virus. In Phytolacca americana (American pokeweed), this protein is Antiviral protein alpha.